A 209-amino-acid polypeptide reads, in one-letter code: Urease accessory protein UreG (209 aa).

Position 14-21 (14-21) interacts with GTP; that stretch reads GPVGSGKT.

The protein belongs to the SIMIBI class G3E GTPase family. UreG subfamily. Homodimer. UreD, UreF and UreG form a complex that acts as a GTP-hydrolysis-dependent molecular chaperone, activating the urease apoprotein by helping to assemble the nickel containing metallocenter of UreC. The UreE protein probably delivers the nickel.

The protein localises to the cytoplasm. Functionally, facilitates the functional incorporation of the urease nickel metallocenter. This process requires GTP hydrolysis, probably effectuated by UreG. The chain is Urease accessory protein UreG from Rhodopseudomonas palustris (strain ATCC BAA-98 / CGA009).